A 271-amino-acid polypeptide reads, in one-letter code: MIIIGEKLNGAIPVVKKAIEEKDEAFIRDRAIAQAEAGATYIDVCAGTAPEIELESLKWMMDIVQEAVETPLCIDSPDPEILKAVFPLCKKPGLVNSVSGEGNKMDVLLPLFDDADPTWELVAMTCDNAGIPNTVEKKVELTKMMVEEAKKHNLTPNRIHIDPCVMALSTENHSFLNFKAEIEGIREIYPDIHITSGLSNISFGLPARKLMNQNFMTLSMFVGMDSAVMDPTSRDMMGAIFATDALLGNDRLCRKYSKAFRQGKIGPVQAK.

The Pterin-binding domain occupies 1-247; it reads MIIIGEKLNG…GAIFATDALL (247 aa).

Belongs to the vitamin-B12 dependent methionine synthase family. The proline betaine:THF methyl transfer system is composed of two methyltransferases, MtpB and MtqA, and the corrinoid protein MtqC. The L-carnitine:THF methyl transfer system is composed of two methyltransferases, MtcB and MtqA, and the corrinoid protein MtqC.

It catalyses the reaction methyl-Co(III)-[quaternary-amine-specific corrinoid protein] + (6S)-5,6,7,8-tetrahydrofolate = Co(I)-[quaternary-amine-specific corrinoid protein] + (6S)-5-methyl-5,6,7,8-tetrahydrofolate + H(+). Functionally, involved in the degradation of the quaternary amines L-proline betaine and L-carnitine. Component of a corrinoid-dependent methyltransferase system that transfers a methyl group from L-proline betaine or L-carnitine to tetrahydrofolate (THF), forming methyl-THF, a key intermediate in the Wood-Ljungdahl acetogenesis pathway. MtqA catalyzes the transfer of a methyl group from the methylated corrinoid protein MtqC to THF, forming methyl-THF. This chain is Methylcorrinoid:tetrahydrofolate methyltransferase, found in Eubacterium limosum.